A 326-amino-acid chain; its full sequence is D-alanine--D-alanine ligase (326 aa).

In terms of domain architecture, ATP-grasp spans 114-313 (KRVWLQHGLR…YAELCVSIVS (200 aa)). Position 140–195 (140–195 (PDRLGLPLILKPPHEGSTVGITKVAGYSDMKEGYAQAAKFDDEVLAEQFIAGRELT)) interacts with ATP. Residues Asp-267, Glu-280, and Asn-282 each contribute to the Mg(2+) site.

The protein belongs to the D-alanine--D-alanine ligase family. The cofactor is Mg(2+). It depends on Mn(2+) as a cofactor.

The protein localises to the cytoplasm. It carries out the reaction 2 D-alanine + ATP = D-alanyl-D-alanine + ADP + phosphate + H(+). Its pathway is cell wall biogenesis; peptidoglycan biosynthesis. Functionally, cell wall formation. The chain is D-alanine--D-alanine ligase from Bordetella petrii (strain ATCC BAA-461 / DSM 12804 / CCUG 43448).